The primary structure comprises 90 residues: Small ribosomal subunit protein bS16 (90 aa).

It belongs to the bacterial ribosomal protein bS16 family.

The chain is Small ribosomal subunit protein bS16 from Bacillus cytotoxicus (strain DSM 22905 / CIP 110041 / 391-98 / NVH 391-98).